The following is a 394-amino-acid chain: Metal tolerance protein 11 (394 aa).

Over 1–103 the chain is Cytoplasmic; sequence MVEPASPDSD…EQDNLAKSET (103 aa). A helical membrane pass occupies residues 104–124; sequence LAIRISNIANMLLFAAKVYAS. Residues 125–130 lie on the Vacuolar side of the membrane; it reads VTSGSL. The helical transmembrane segment at 131 to 151 threads the bilayer; that stretch reads AIIASTLDSLLDLLSGFILWF. Over 152–172 the chain is Cytoplasmic; the sequence is TAFSMQTPNPYQYPIGKKRMQ. The chain crosses the membrane as a helical span at residues 173–193; sequence PLGILVFASVMATLGLQIILE. At 194-212 the chain is on the vacuolar side; it reads SLRTMLSSHKEFNLTKEQE. A helical membrane pass occupies residues 213 to 233; the sequence is SWVVGIMLSVTLVKLLLVLYC. The Cytoplasmic segment spans residues 234–251; sequence RSFTNEIVKAYAQDHFFD. The helical transmembrane segment at 252-272 threads the bilayer; the sequence is VITNIIGLIAVILANYIDYWI. Residue D273 is a topological domain, vacuolar. A helical transmembrane segment spans residues 274–294; that stretch reads PVGAIILALYTIRTWSMTVLE. Over 295 to 394 the chain is Cytoplasmic; the sequence is NVNSLVGKSA…HKPEHARSHC (100 aa).

Belongs to the cation diffusion facilitator (CDF) transporter (TC 2.A.4) family. SLC30A subfamily. Widely expressed.

Its subcellular location is the prevacuolar compartment membrane. It is found in the golgi apparatus membrane. In terms of biological role, cation/proton antiporter involved in endogenous manganese tolerance probably through vesicular trafficking and exocytosis. The sequence is that of Metal tolerance protein 11 (MTP11) from Arabidopsis thaliana (Mouse-ear cress).